Here is a 128-residue protein sequence, read N- to C-terminus: Protein ripply2 (128 aa).

Residues 1-63 (MENAGGAEGT…HAAEAMPDGP (63 aa)) form a disordered region. A compositionally biased stretch (low complexity) spans 9–22 (GTESGAAACAATDG). Positions 37-40 (WRPW) match the WRPW motif motif. The segment at 77 to 112 (HPVRLFWPKSKCYDYLYQEAEALLKNFPIQATISFY) is ripply homology domain.

Belongs to the ripply family.

It is found in the nucleus. Plays a role in somitogenesis. Required for somite segregation and establishment of rostrocaudal polarity in somites. This is Protein ripply2 (RIPPLY2) from Homo sapiens (Human).